The chain runs to 360 residues: Phospho-N-acetylmuramoyl-pentapeptide-transferase (360 aa).

The next 10 helical transmembrane spans lie at 27–47, 71–91, 93–113, 128–148, 168–188, 199–219, 239–259, 262–282, 288–308, and 337–357; these read GAMI…INSL, TPTM…LLWA, LASV…AIGF, FSGK…AFTI, LVIN…VGAG, GLAI…AYLS, LAVV…FNAP, AIFM…TVAV, IVLA…IIQV, and QVVI…LSTL.

This sequence belongs to the glycosyltransferase 4 family. MraY subfamily. Mg(2+) serves as cofactor.

The protein localises to the cell inner membrane. The enzyme catalyses UDP-N-acetyl-alpha-D-muramoyl-L-alanyl-gamma-D-glutamyl-meso-2,6-diaminopimeloyl-D-alanyl-D-alanine + di-trans,octa-cis-undecaprenyl phosphate = di-trans,octa-cis-undecaprenyl diphospho-N-acetyl-alpha-D-muramoyl-L-alanyl-D-glutamyl-meso-2,6-diaminopimeloyl-D-alanyl-D-alanine + UMP. It functions in the pathway cell wall biogenesis; peptidoglycan biosynthesis. Catalyzes the initial step of the lipid cycle reactions in the biosynthesis of the cell wall peptidoglycan: transfers peptidoglycan precursor phospho-MurNAc-pentapeptide from UDP-MurNAc-pentapeptide onto the lipid carrier undecaprenyl phosphate, yielding undecaprenyl-pyrophosphoryl-MurNAc-pentapeptide, known as lipid I. This is Phospho-N-acetylmuramoyl-pentapeptide-transferase from Brucella ovis (strain ATCC 25840 / 63/290 / NCTC 10512).